Consider the following 557-residue polypeptide: Thermosome subunit 2 (557 aa).

The disordered stretch occupies residues 527-557 (DLSTGGDDDEEGGAPGGMGGMGGMGGMGGAM). Gly residues predominate over residues 539-557 (GAPGGMGGMGGMGGMGGAM).

It belongs to the TCP-1 chaperonin family. The thermosome or CCT complex is a oligomeric complex of two octameric double-ring structures; the complex is probably a heterooligomer of CCT1, CCT2 and CCT3 with yet unknown stoichiometry.

Its function is as follows. Molecular chaperone that assists in the folding or refolding of nascent or denatured proteins along with ATP hydrolysis. ATPase activity is highest in thermosome assemblies containing CCT1:CCT2, followed by assemblies containing CCT1:CCT2:CCT3. Seems to contribute to thermosome ATPase activity. Not required for growth. In Haloferax volcanii (strain ATCC 29605 / DSM 3757 / JCM 8879 / NBRC 14742 / NCIMB 2012 / VKM B-1768 / DS2) (Halobacterium volcanii), this protein is Thermosome subunit 2 (cct2).